The following is a 211-amino-acid chain: Probable endo-1,4-beta-xylanase 5 (211 aa).

Residues 1–16 (MKVTAAFASLLLTAFA) form the signal peptide. The 192-residue stretch at 19-210 (APEPVLVSRS…GAGSASVTIS (192 aa)) folds into the GH11 domain. The active-site Nucleophile is the Glu-106. Catalysis depends on Glu-197, which acts as the Proton donor.

The protein belongs to the glycosyl hydrolase 11 (cellulase G) family.

The protein resides in the secreted. The enzyme catalyses Endohydrolysis of (1-&gt;4)-beta-D-xylosidic linkages in xylans.. Its pathway is glycan degradation; xylan degradation. Functionally, endo-1,4-beta-xylanase involved in the hydrolysis of xylan, a major structural heterogeneous polysaccharide found in plant biomass representing the second most abundant polysaccharide in the biosphere, after cellulose. In Aspergillus niger (strain ATCC MYA-4892 / CBS 513.88 / FGSC A1513), this protein is Probable endo-1,4-beta-xylanase 5 (XYN5).